The following is a 94-amino-acid chain: DNA-directed RNA polymerase subunit omega (94 aa).

This sequence belongs to the RNA polymerase subunit omega family. The RNAP catalytic core consists of 2 alpha, 1 beta, 1 beta' and 1 omega subunit. When a sigma factor is associated with the core the holoenzyme is formed, which can initiate transcription.

The catalysed reaction is RNA(n) + a ribonucleoside 5'-triphosphate = RNA(n+1) + diphosphate. Its function is as follows. Promotes RNA polymerase assembly. Latches the N- and C-terminal regions of the beta' subunit thereby facilitating its interaction with the beta and alpha subunits. The polypeptide is DNA-directed RNA polymerase subunit omega (Shewanella pealeana (strain ATCC 700345 / ANG-SQ1)).